Reading from the N-terminus, the 229-residue chain is Serine acetyltransferase (229 aa).

This sequence belongs to the transferase hexapeptide repeat family.

Its subcellular location is the cytoplasm. It catalyses the reaction L-serine + acetyl-CoA = O-acetyl-L-serine + CoA. It participates in amino-acid biosynthesis; L-cysteine biosynthesis; L-cysteine from L-serine: step 1/2. In terms of biological role, catalyzes the acetylation of serine by acetyl-CoA to produce O-acetylserine (OAS). This Mycobacterium tuberculosis (strain ATCC 25618 / H37Rv) protein is Serine acetyltransferase (cysE).